The sequence spans 106 residues: MSATSEMLAEINEVNLSYLLLAQRLLREDKAMGMFRMGISEELADVLVNLTLAQTVKLAASNQMLCRFRFDDHALLSSLADKGRSSAVSHAHSAILMAGQPVESLR.

This sequence belongs to the FlhD family. In terms of assembly, homodimer; disulfide-linked. Forms a heterohexamer composed of two FlhC and four FlhD subunits. Each FlhC binds a FlhD dimer, forming a heterotrimer, and a hexamer assembles by dimerization of two heterotrimers.

It is found in the cytoplasm. Its function is as follows. Functions in complex with FlhC as a master transcriptional regulator that regulates transcription of several flagellar and non-flagellar operons by binding to their promoter region. Activates expression of class 2 flagellar genes, including fliA, which is a flagellum-specific sigma factor that turns on the class 3 genes. Also regulates genes whose products function in a variety of physiological pathways. This Burkholderia mallei (strain SAVP1) protein is Flagellar transcriptional regulator FlhD.